Reading from the N-terminus, the 174-residue chain is Transcription antitermination protein NusB (174 aa).

The protein belongs to the NusB family.

Functionally, involved in transcription antitermination. Required for transcription of ribosomal RNA (rRNA) genes. Binds specifically to the boxA antiterminator sequence of the ribosomal RNA (rrn) operons. The polypeptide is Transcription antitermination protein NusB (Rhodopseudomonas palustris (strain ATCC BAA-98 / CGA009)).